A 132-amino-acid polypeptide reads, in one-letter code: Small ribosomal subunit protein uS8c (132 aa).

It belongs to the universal ribosomal protein uS8 family. Part of the 30S ribosomal subunit.

The protein localises to the plastid. It is found in the chloroplast. Its function is as follows. One of the primary rRNA binding proteins, it binds directly to 16S rRNA central domain where it helps coordinate assembly of the platform of the 30S subunit. The protein is Small ribosomal subunit protein uS8c (rps8) of Spirogyra maxima (Green alga).